The primary structure comprises 169 residues: Disulfide bond formation protein B (169 aa).

The Cytoplasmic portion of the chain corresponds to 1–14 (MNNLTLSLHRERRL). A helical transmembrane segment spans residues 15-31 (LVLLGLVCLALLAGALY). Topologically, residues 32–49 (LQYVKNEDPCPLCIIQRY) are periplasmic. A disulfide bridge links C41 with C44. The helical transmembrane segment at 50 to 64 (FFVLIAVFAFIGAGM) threads the bilayer. Topologically, residues 65–71 (ASGAGIA) are cytoplasmic. The helical transmembrane segment at 72–89 (VIEALIVLSAAAGVGTAA) threads the bilayer. At 90–144 (RHLYVQLNPGFSCGFDALQPVVDSLPPAHWLPGVFKVAGLCETVYPPIFGILLPG) the chain is on the periplasmic side. C102 and C130 are joined by a disulfide. A helical membrane pass occupies residues 145-163 (WALIAFALIVVPVAASLLR). At 164 to 169 (HRGRLR) the chain is on the cytoplasmic side.

Belongs to the DsbB family.

The protein resides in the cell inner membrane. Required for disulfide bond formation in some periplasmic proteins. Acts by oxidizing the DsbA protein. The polypeptide is Disulfide bond formation protein B (Burkholderia thailandensis (strain ATCC 700388 / DSM 13276 / CCUG 48851 / CIP 106301 / E264)).